A 397-amino-acid polypeptide reads, in one-letter code: CCA-adding enzyme (397 aa).

ATP-binding residues include Gly-27 and Arg-30. Residues Gly-27 and Arg-30 each coordinate CTP. 2 residues coordinate Mg(2+): Asp-40 and Asp-42. ATP contacts are provided by Arg-111, Asp-154, Arg-157, Arg-160, and Arg-163. CTP is bound by residues Arg-111, Asp-154, Arg-157, Arg-160, and Arg-163.

This sequence belongs to the tRNA nucleotidyltransferase/poly(A) polymerase family. Bacterial CCA-adding enzyme type 3 subfamily. Homodimer. Mg(2+) serves as cofactor.

The enzyme catalyses a tRNA precursor + 2 CTP + ATP = a tRNA with a 3' CCA end + 3 diphosphate. The catalysed reaction is a tRNA with a 3' CCA end + 2 CTP + ATP = a tRNA with a 3' CCACCA end + 3 diphosphate. Its function is as follows. Catalyzes the addition and repair of the essential 3'-terminal CCA sequence in tRNAs without using a nucleic acid template. Adds these three nucleotides in the order of C, C, and A to the tRNA nucleotide-73, using CTP and ATP as substrates and producing inorganic pyrophosphate. tRNA 3'-terminal CCA addition is required both for tRNA processing and repair. Also involved in tRNA surveillance by mediating tandem CCA addition to generate a CCACCA at the 3' terminus of unstable tRNAs. While stable tRNAs receive only 3'-terminal CCA, unstable tRNAs are marked with CCACCA and rapidly degraded. The polypeptide is CCA-adding enzyme (Anoxybacillus flavithermus (strain DSM 21510 / WK1)).